The chain runs to 250 residues: 2,3-bisphosphoglycerate-dependent phosphoglycerate mutase (250 aa).

Substrate contacts are provided by residues 10–17 (RHGESQWN), 23–24 (TG), Arg62, 89–92 (ERHY), Lys100, 116–117 (RR), and 185–186 (GN). His11 (tele-phosphohistidine intermediate) is an active-site residue. Glu89 serves as the catalytic Proton donor/acceptor.

Belongs to the phosphoglycerate mutase family. BPG-dependent PGAM subfamily. In terms of assembly, homodimer.

The catalysed reaction is (2R)-2-phosphoglycerate = (2R)-3-phosphoglycerate. The protein operates within carbohydrate degradation; glycolysis; pyruvate from D-glyceraldehyde 3-phosphate: step 3/5. In terms of biological role, catalyzes the interconversion of 2-phosphoglycerate and 3-phosphoglycerate. The sequence is that of 2,3-bisphosphoglycerate-dependent phosphoglycerate mutase from Salmonella dublin (strain CT_02021853).